Reading from the N-terminus, the 309-residue chain is Phytoene synthase (309 aa).

This sequence belongs to the phytoene/squalene synthase family. Requires ATP as cofactor. Mn(2+) is required as a cofactor. It depends on Mg(2+) as a cofactor.

It functions in the pathway carotenoid biosynthesis; phytoene biosynthesis. Functionally, involved in the biosynthesis of carotenoids. Catalyzes the condensation of two molecules of geranylgeranyl diphosphate (GGPP) to give prephytoene diphosphate (PPPP) and the subsequent rearrangement of the cyclopropylcarbinyl intermediate to yield phytoene. This Pseudescherichia vulneris (Escherichia vulneris) protein is Phytoene synthase (crtB).